A 568-amino-acid polypeptide reads, in one-letter code: Proline--tRNA ligase (568 aa).

It belongs to the class-II aminoacyl-tRNA synthetase family. ProS type 1 subfamily. As to quaternary structure, homodimer.

The protein localises to the cytoplasm. It carries out the reaction tRNA(Pro) + L-proline + ATP = L-prolyl-tRNA(Pro) + AMP + diphosphate. Catalyzes the attachment of proline to tRNA(Pro) in a two-step reaction: proline is first activated by ATP to form Pro-AMP and then transferred to the acceptor end of tRNA(Pro). As ProRS can inadvertently accommodate and process non-cognate amino acids such as alanine and cysteine, to avoid such errors it has two additional distinct editing activities against alanine. One activity is designated as 'pretransfer' editing and involves the tRNA(Pro)-independent hydrolysis of activated Ala-AMP. The other activity is designated 'posttransfer' editing and involves deacylation of mischarged Ala-tRNA(Pro). The misacylated Cys-tRNA(Pro) is not edited by ProRS. This chain is Proline--tRNA ligase, found in Listeria monocytogenes serovar 1/2a (strain ATCC BAA-679 / EGD-e).